The following is a 286-amino-acid chain: Bifunctional protein FolD (286 aa).

NADP(+) is bound by residues 165–167 and Ser-190; that span reads GRS.

Belongs to the tetrahydrofolate dehydrogenase/cyclohydrolase family. In terms of assembly, homodimer.

It carries out the reaction (6R)-5,10-methylene-5,6,7,8-tetrahydrofolate + NADP(+) = (6R)-5,10-methenyltetrahydrofolate + NADPH. The catalysed reaction is (6R)-5,10-methenyltetrahydrofolate + H2O = (6R)-10-formyltetrahydrofolate + H(+). It participates in one-carbon metabolism; tetrahydrofolate interconversion. Catalyzes the oxidation of 5,10-methylenetetrahydrofolate to 5,10-methenyltetrahydrofolate and then the hydrolysis of 5,10-methenyltetrahydrofolate to 10-formyltetrahydrofolate. The chain is Bifunctional protein FolD from Staphylococcus aureus (strain JH9).